Consider the following 181-residue polypeptide: Inner membrane-spanning protein YciB (181 aa).

5 helical membrane passes run Ile22–Ala42, Met50–Asp70, Ile80–Ile100, Trp122–Leu142, and Phe148–Val168.

It belongs to the YciB family.

Its subcellular location is the cell inner membrane. Plays a role in cell envelope biogenesis, maintenance of cell envelope integrity and membrane homeostasis. The polypeptide is Inner membrane-spanning protein YciB (Aliivibrio fischeri (strain ATCC 700601 / ES114) (Vibrio fischeri)).